A 118-amino-acid chain; its full sequence is Sarafotoxin-i1 (118 aa).

An N-terminal signal peptide occupies residues 1–23 (MALLPRLAAGGLLLLLALAALDG). Residues 24 to 84 (KPAPPKLLQK…LSPLRKPQPL (61 aa)) constitute a propeptide that is removed on maturation. 2 disulfide bridges follow: cysteine 85–cysteine 99 and cysteine 87–cysteine 95. A propeptide spanning residues 112 to 118 (PSPIQSS) is cleaved from the precursor.

The protein belongs to the endothelin/sarafotoxin family. Post-translationally, different length molecules ranging from 15 (85-99) to 30 amino acids (85-114) have been found in the venom. As to expression, expressed by the venom gland.

The protein localises to the secreted. In terms of biological role, vasoconstrictor activity. These toxins cause cardiac arrest probably as a result of coronary vasospasm. Sarafotoxin-i3: vasoconstrictor activity. Causes cardiac arrest probably as a result of coronary vasospasm. Displays low agonistic activities towards endothelin-2 receptor (EDNRB) (displays affinity in the micromolar range). This is Sarafotoxin-i1 from Atractaspis irregularis (Variable burrowing asp).